We begin with the raw amino-acid sequence, 953 residues long: Valine--tRNA ligase (953 aa).

The 'HIGH' region signature appears at 42–52 (PNVTGSLHMGH). Residues 554–558 (KMSKS) carry the 'KMSKS' region motif. K557 is a binding site for ATP. Positions 884–953 (LIDKDAELAR…EAQKETIAAL (70 aa)) form a coiled coil.

This sequence belongs to the class-I aminoacyl-tRNA synthetase family. ValS type 1 subfamily. As to quaternary structure, monomer.

It is found in the cytoplasm. The catalysed reaction is tRNA(Val) + L-valine + ATP = L-valyl-tRNA(Val) + AMP + diphosphate. Its function is as follows. Catalyzes the attachment of valine to tRNA(Val). As ValRS can inadvertently accommodate and process structurally similar amino acids such as threonine, to avoid such errors, it has a 'posttransfer' editing activity that hydrolyzes mischarged Thr-tRNA(Val) in a tRNA-dependent manner. In Photobacterium profundum (strain SS9), this protein is Valine--tRNA ligase.